A 275-amino-acid chain; its full sequence is Large ribosomal subunit protein uL2cz (275 aa).

Disordered regions lie at residues 1–22 and 226–275; these read MAIH…DSQV and NPVD…RRRK.

It belongs to the universal ribosomal protein uL2 family. In terms of assembly, part of the 50S ribosomal subunit.

Its subcellular location is the plastid. It is found in the chloroplast. This chain is Large ribosomal subunit protein uL2cz (rpl2-A), found in Chloranthus spicatus (Chulantree).